A 273-amino-acid polypeptide reads, in one-letter code: Dermonecrotic toxin LapSicTox-alphaIB1b3 (273 aa).

The active site involves H5. Positions 25 and 27 each coordinate Mg(2+). The Nucleophile role is filled by H41. 2 cysteine pairs are disulfide-bonded: C45/C51 and C47/C190. D85 is a Mg(2+) binding site. Residue N250 is glycosylated (N-linked (GlcNAc...) asparagine).

This sequence belongs to the arthropod phospholipase D family. Class II subfamily. The cofactor is Mg(2+). In terms of tissue distribution, expressed by the venom gland.

It localises to the secreted. The catalysed reaction is an N-(acyl)-sphingosylphosphocholine = an N-(acyl)-sphingosyl-1,3-cyclic phosphate + choline. It catalyses the reaction an N-(acyl)-sphingosylphosphoethanolamine = an N-(acyl)-sphingosyl-1,3-cyclic phosphate + ethanolamine. The enzyme catalyses a 1-acyl-sn-glycero-3-phosphocholine = a 1-acyl-sn-glycero-2,3-cyclic phosphate + choline. It carries out the reaction a 1-acyl-sn-glycero-3-phosphoethanolamine = a 1-acyl-sn-glycero-2,3-cyclic phosphate + ethanolamine. Dermonecrotic toxins cleave the phosphodiester linkage between the phosphate and headgroup of certain phospholipids (sphingolipid and lysolipid substrates), forming an alcohol (often choline) and a cyclic phosphate. This toxin acts on sphingomyelin (SM). It may also act on ceramide phosphoethanolamine (CPE), lysophosphatidylcholine (LPC) and lysophosphatidylethanolamine (LPE), but not on lysophosphatidylserine (LPS), and lysophosphatidylglycerol (LPG). It acts by transphosphatidylation, releasing exclusively cyclic phosphate products as second products. Induces dermonecrosis, hemolysis, increased vascular permeability, edema, inflammatory response, and platelet aggregation. This Loxosceles apachea (Apache recluse spider) protein is Dermonecrotic toxin LapSicTox-alphaIB1b3.